Consider the following 224-residue polypeptide: Probable Brix domain-containing ribosomal biogenesis protein (224 aa).

Positions 1–196 (MMLITTSHRP…IWIMEDGRRW (196 aa)) constitute a Brix domain.

Functionally, probably involved in the biogenesis of the ribosome. The chain is Probable Brix domain-containing ribosomal biogenesis protein from Pyrococcus abyssi (strain GE5 / Orsay).